The sequence spans 817 residues: MDVADAQVGQLRVKDEVGIRAQKLFQDFLEEFKEDGEIKYTRPAASLESPDRCTLEVSFEDVEKYDQNLATAIIEEYYHIYPFLCQSVSNYVKDRIGLKTQKDCYVAFTEVPTRHKVRDLTTSKIGTLIRISGQVVRTHPVHPELVSGVFMCLDCQTEIRNVEQQFKFTNPTICRNPVCSNRKRFMLDVEKSLFLDFQKIRIQETQAELPRGCIPRAVEIILRSELVETVQAGDRYDFTGTLIVVPDVSVLAGVGTRAENSSRHKPGEGMDGVTGLKALGMRELNYRMAFLACSVQATTARFGGTDLPMSEVTAEDMKKQMTDAEWHKIYEMSKDRNLYQNLISSLFPSIYGNDEVKRGILLQQFGGVAKTTTEKTSLRGDINVCIVGDPSTAKSQFLKQVSDFSPRAIYTSGKASSAAGLTAAVVRDEESFDFVIEAGALMLADNGICCIDEFDKMDQRDQVAIHEAMEQQTISIARAGVRATLNARTSILAAANPINGRYDRSKSLQQNIQLSAPIMSRFDLFFILVDECNEVVDYAIARKIVDLHSNIEESVERAYTREEVLRYVTFARQFKPVISQEAGHMLVENYGHLRQRDTGTSGRSTWRITVRQLESMIRLSEAMAKLECSNRVLERHVKEAFRLLNKSIIRVEQPDIHLDDDEGLDMDDGIQHDIDMENNGAAANVDENNGMDTSASGAVQKKKFTLSFEDYKNLSTMLVLHMRAEEARCEVEGNDTGIKRSNVVTWYLEQVADQIESEDELISRKNLIEKLIDRLIYHDQVIIPLKTSTLKPRIQVQKDFVEEDDPLLVVHPNYVVE.

The segment at 152–179 (CLDCQTEIRNVEQQFKFTNPTICRNPVC) adopts a C4-type zinc-finger fold. The MCM domain occupies 338 to 544 (LYQNLISSLF…VVDYAIARKI (207 aa)). ATP contacts are provided by S391, T392, A393, K394, S395, and N496. The Arginine finger motif lies at 520 to 523 (SRFD). Positions 611 and 614 each coordinate ADP.

It belongs to the MCM family. Component of the Mcm2-7 complex. The complex forms a toroidal hexameric ring with the proposed subunit order Mcm2-Mcm6-Mcm4-Mcm7-Mcm3-Mcm5. The heterodimers of Mcm4/Mcm6 and Mcm3/Mcm5 interact with Mcm2 and Mcm7. In terms of tissue distribution, in stage 12 embryos, strongly expressed in the CNS and weakly in the gut.

It localises to the nucleus. The enzyme catalyses ATP + H2O = ADP + phosphate + H(+). In terms of biological role, acts as a component of the Mcm2-7 complex (Mcm complex) which is the putative replicative helicase essential for 'once per cell cycle' DNA replication initiation and elongation in eukaryotic cells. Core component of CDC45-MCM-GINS (CMG) helicase, the molecular machine that unwinds template DNA during replication, and around which the replisome is built. The active ATPase sites in the Mcm2-7 ring are formed through the interaction surfaces of two neighboring subunits such that a critical structure of a conserved arginine finger motif is provided in trans relative to the ATP-binding site of the Walker A box of the adjacent subunit. The six ATPase active sites, however, are likely to contribute differentially to the complex helicase activity Required for DNA replication and cell proliferation. Required for mitotic cycles, endocycles, and the special S phase associated with the amplification of chorion genes; has a role in origin unwinding or fork elongation at chorion loci. The polypeptide is DNA replication licensing factor Mcm6 (Drosophila melanogaster (Fruit fly)).